Reading from the N-terminus, the 485-residue chain is MLTLSTIDMLLAINEGQLIEEVIITLLASPQLAVFFEKHPRLKKALLKDIYQWKKSLQEKVKETLVPTIIADEFALYQQTQSLCNAVFNQQVDNILTELNQLDSSFVIEATQLIKTNKPFSPAQQALFIQRWRISLIFQVTTLHKALFEQEQEQLLAELQERLALSGSLSNTFSENERAAGRLWDMSKGVITKTPYDEKIIQRYSDFLNQQPELHKLASLLGRSKTAKSLPEESVIFESITIVEKAPDTTPEQVNGIGLSDDILRLLPAELALLGINEVEYEFYRKLIEKQLNTYRLQGDSWQERTVLRPVTHHLDEERPRGPFIICIDTSGSMGGFNEQCAKAFGLALMKIALADNRACHVMLFSTEMIHYQLSSSDGLQELVKFLNQTFRGGTDLASCLNEVADKLNTPTWKDADAVVISDFVAQRLPENLINKIKKVQQQQHNRFHAVTLSNYGKPSIMKIFDHIWRFDTGLKSRLLRRWRQ.

This sequence belongs to the ViaA family. In terms of assembly, homodimer. Interacts with RavA.

It localises to the cytoplasm. Component of the RavA-ViaA chaperone complex, which may act on the membrane to optimize the function of some of the respiratory chains. ViaA stimulates the ATPase activity of RavA. This Proteus mirabilis (strain HI4320) protein is Regulatory protein ViaA.